Consider the following 361-residue polypeptide: Lactate-binding periplasmic protein TTHA0766 (361 aa).

Positions 1-22 (MKRVSRRAFLRRLGVGVAATAA) form a signal peptide, tat-type signal. Tyr-101, Asn-158, and Arg-178 together coordinate substrate. Asn-158 serves as a coordination point for Ca(2+). Residues Asp-216, Phe-217, and Gln-247 each contribute to the Ca(2+) site. Substrate is bound by residues Phe-217 and 247–250 (QPVD).

The protein belongs to the bacterial solute-binding protein 7 family. Homodimer. The complex comprises the extracytoplasmic solute receptor protein TTHA0766, and the two putative transmembrane proteins TTHA0767 and TTHA0768.

Its subcellular location is the periplasm. Its function is as follows. Part of the tripartite ATP-independent periplasmic (TRAP) transport system involved in the uptake of lactate. This protein specifically binds L-lactate. This chain is Lactate-binding periplasmic protein TTHA0766, found in Thermus thermophilus (strain ATCC 27634 / DSM 579 / HB8).